The primary structure comprises 815 residues: 1,4-alpha-glucan branching enzyme GlgB (815 aa).

The Nucleophile role is filled by aspartate 405. The Proton donor role is filled by glutamate 458.

The protein belongs to the glycosyl hydrolase 13 family. GlgB subfamily. Monomer.

It carries out the reaction Transfers a segment of a (1-&gt;4)-alpha-D-glucan chain to a primary hydroxy group in a similar glucan chain.. It functions in the pathway glycan biosynthesis; glycogen biosynthesis. Functionally, catalyzes the formation of the alpha-1,6-glucosidic linkages in glycogen by scission of a 1,4-alpha-linked oligosaccharide from growing alpha-1,4-glucan chains and the subsequent attachment of the oligosaccharide to the alpha-1,6 position. This Histophilus somni (strain 2336) (Haemophilus somnus) protein is 1,4-alpha-glucan branching enzyme GlgB.